Here is a 108-residue protein sequence, read N- to C-terminus: MASRRSAAAKKEDFSFEAAATQSAHEAQEGFPSSVIIKLVLVTVAMICAPLGTYFGTLNTICGGDSSYAGALAAISVNVVLIIYLIIAAREDTGESEEERKGKEGKEE.

Residues 1 to 34 (MASRRSAAAKKEDFSFEAAATQSAHEAQEGFPSS) are Cytoplasmic-facing. Residues 35 to 55 (VIIKLVLVTVAMICAPLGTYF) form a helical membrane-spanning segment. Residues 56–68 (GTLNTICGGDSSY) are Lumenal-facing. The helical transmembrane segment at 69–89 (AGALAAISVNVVLIIYLIIAA) threads the bilayer. The Cytoplasmic portion of the chain corresponds to 90 to 108 (REDTGESEEERKGKEGKEE).

Belongs to the VMA21 family.

The protein resides in the endoplasmic reticulum membrane. It is found in the endoplasmic reticulum-Golgi intermediate compartment membrane. Its subcellular location is the cytoplasmic vesicle. It localises to the COPII-coated vesicle membrane. Functionally, required for the assembly of the V0 complex of the vacuolar ATPase (V-ATPase) in the endoplasmic reticulum. This chain is Vacuolar ATPase assembly integral membrane protein VMA21, found in Ajellomyces capsulatus (strain NAm1 / WU24) (Darling's disease fungus).